Consider the following 623-residue polypeptide: NAD-dependent malic enzyme 1, mitochondrial (623 aa).

The transit peptide at 1 to 38 directs the protein to the mitochondrion; sequence MGIANKLRLSSSSLSRILHRRILYSSAVRSFTTSEGHR. The Proton donor role is filled by tyrosine 143. Arginine 196 is a binding site for NAD(+). The active-site Proton acceptor is the lysine 214. A divalent metal cation-binding residues include glutamate 285, aspartate 286, and aspartate 309. Positions 309 and 464 each coordinate NAD(+).

The protein belongs to the malic enzymes family. Homodimer. Heterodimer of two related subunits in NAD-MEH complex. Interacts with NAD-ME2. The cofactor is Mg(2+). Mn(2+) serves as cofactor. As to expression, expressed in leaves, stems, flowers, and roots (at protein level).

The protein localises to the mitochondrion. It carries out the reaction (S)-malate + NAD(+) = pyruvate + CO2 + NADH. Activated by oxaloacetate (OAA), 2-ketoglutarate, succinate and fumarate as homodimer and by OAA, 2-ketoglutarate, succinate, fumarate and coenzyme A (acetyl-CoA and CoA) as heterodimer NAD-MEH. Functionally, involved in the regulation of sugars and amino acids metabolisms during the night period. The protein is NAD-dependent malic enzyme 1, mitochondrial (NAD-ME1) of Arabidopsis thaliana (Mouse-ear cress).